We begin with the raw amino-acid sequence, 142 residues long: Probable transport accessory protein MmpS1 (142 aa).

2 helical membrane-spanning segments follow: residues 8-28 and 81-101; these read FWIPMVIVIVVAVAAVTVSRL and VVNAAVPWSFTIVTTLTAVVA.

It belongs to the MmpS family.

It localises to the cell membrane. The polypeptide is Probable transport accessory protein MmpS1 (mmpS1) (Mycobacterium bovis (strain ATCC BAA-935 / AF2122/97)).